Here is a 243-residue protein sequence, read N- to C-terminus: Probable 2-phosphosulfolactate phosphatase (243 aa).

The protein belongs to the ComB family. Requires Mg(2+) as cofactor.

It carries out the reaction (2R)-O-phospho-3-sulfolactate + H2O = (2R)-3-sulfolactate + phosphate. The chain is Probable 2-phosphosulfolactate phosphatase from Prochlorococcus marinus (strain MIT 9313).